The chain runs to 413 residues: MQADLVLYNIGQLVTSRELDKTKKMDNIEVIENNGYIVIEKDKIVAVGSGEVLKEYLTPATEMVDLSGKLVTPGLIDSHTHLVHGGSRENEFAMKIAGVPYLEILEKGGGILSTLKSTRNASEQELIEKTLKSLRHMLELGVTTVEAKSGYGLNLEDELKQLEVTKILGYLQPVTLVSTFMAAHATPPEYKDNKEGYVQEVIKMLPIVKERNLAEFCDIFCEDKVFSVDESRRILTVAKELGYKLKIHADEIVSLGGVELAAELGATSAEHLMKITDSGINALANSNVIADLLPATSFNLMEHYAPARKMIEAGIQIALSTDYNPGSCPSENLQFVMQIGAAHLKMTPKEVFKSVTINAAKAIDKQDTIGSIEVGKKADITVFDAPSMAYFLYHFGINHTDSVYKNGKLVFKK.

Positions 79 and 81 each coordinate Fe(3+). Zn(2+) is bound by residues H79 and H81. The 4-imidazolone-5-propanoate site is built by R88, Y151, and H184. Y151 serves as a coordination point for N-formimidoyl-L-glutamate. H248 is a binding site for Fe(3+). Residue H248 coordinates Zn(2+). E251 contributes to the 4-imidazolone-5-propanoate binding site. D322 serves as a coordination point for Fe(3+). D322 lines the Zn(2+) pocket. N-formimidoyl-L-glutamate contacts are provided by N324 and G326. S327 is a 4-imidazolone-5-propanoate binding site.

This sequence belongs to the metallo-dependent hydrolases superfamily. HutI family. Zn(2+) is required as a cofactor. It depends on Fe(3+) as a cofactor.

The protein resides in the cytoplasm. The catalysed reaction is 4-imidazolone-5-propanoate + H2O = N-formimidoyl-L-glutamate. It participates in amino-acid degradation; L-histidine degradation into L-glutamate; N-formimidoyl-L-glutamate from L-histidine: step 3/3. Its function is as follows. Catalyzes the hydrolytic cleavage of the carbon-nitrogen bond in imidazolone-5-propanoate to yield N-formimidoyl-L-glutamate. It is the third step in the universal histidine degradation pathway. This is Imidazolonepropionase from Fusobacterium nucleatum subsp. nucleatum (strain ATCC 25586 / DSM 15643 / BCRC 10681 / CIP 101130 / JCM 8532 / KCTC 2640 / LMG 13131 / VPI 4355).